A 491-amino-acid chain; its full sequence is Calcium/calmodulin-dependent protein kinase type II delta 1 chain (491 aa).

Positions 13–271 (YQLYEELGKG…AAEALKHPWI (259 aa)) constitute a Protein kinase domain. ATP-binding positions include 19–27 (LGKGAFSVV) and K42. Residue D135 is the Proton acceptor of the active site. T286 is subject to Phosphothreonine. The residue at position 314 (S314) is a Phosphoserine. Residues 315–354 (SKNPYKKPDGVKEPQTTVIHNPTDGNKESSESTNTTIEDE) form a disordered region. Positions 328 to 338 (PQTTVIHNPTD) are enriched in polar residues. Position 350 is a phosphothreonine (T350).

The protein belongs to the protein kinase superfamily. CAMK Ser/Thr protein kinase family. CaMK subfamily. As to quaternary structure, CAMK2 is composed of four different chains: alpha, beta, gamma, and delta. The different isoforms assemble into homo- or heteromultimeric holoenzymes composed of 8 to 12 subunits. As to expression, first detected at the 18-somite stage where expression is restricted to somite boundaries. At 24 hpf, expression is elevated in epidermal tissue and in the hatching gland. After 24 hpf, expression dimishes, but persists at low levels along the dorsal trunk. At 48 hpf, expression is restricted at a low level to the forebrain. At 72 hpf, weak expression reappears along the entire dorsal trunk in discrete cell bodies.

It carries out the reaction L-seryl-[protein] + ATP = O-phospho-L-seryl-[protein] + ADP + H(+). The catalysed reaction is L-threonyl-[protein] + ATP = O-phospho-L-threonyl-[protein] + ADP + H(+). Its activity is regulated as follows. Autophosphorylation of CAMK2 plays an important role in the regulation of the kinase activity. In terms of biological role, caM-kinase II (CAMK2) is a prominent kinase in the central nervous system. In Danio rerio (Zebrafish), this protein is Calcium/calmodulin-dependent protein kinase type II delta 1 chain.